A 360-amino-acid polypeptide reads, in one-letter code: D-alanine--D-alanine ligase (360 aa).

Positions 149–353 (KKLMAAEGLP…YEELLDVLVQ (205 aa)) constitute an ATP-grasp domain. Residue 176-231 (KNLLGLPVFVKPARGGSSIGISRVTAWEDFNKAVGLARAHDEKVIVESEIVGSEVE) coordinates ATP. 3 residues coordinate Mg(2+): Asp-308, Glu-320, and Asn-322.

This sequence belongs to the D-alanine--D-alanine ligase family. Mg(2+) serves as cofactor. It depends on Mn(2+) as a cofactor.

It localises to the cytoplasm. It catalyses the reaction 2 D-alanine + ATP = D-alanyl-D-alanine + ADP + phosphate + H(+). Its pathway is cell wall biogenesis; peptidoglycan biosynthesis. Its function is as follows. Cell wall formation. The polypeptide is D-alanine--D-alanine ligase (Corynebacterium glutamicum (strain R)).